We begin with the raw amino-acid sequence, 347 residues long: Eukaryotic translation initiation factor 3 subunit I (347 aa).

5 WD repeats span residues 8-47 (GHER…RLGT), 50-89 (DHSG…AVHS), 150-190 (EQAT…VQAK), 192-233 (IHEK…KTYK), and 289-328 (GHFG…FDFK).

Belongs to the eIF-3 subunit I family. Component of the eukaryotic translation initiation factor 3 (eIF-3) complex.

It localises to the cytoplasm. Component of the eukaryotic translation initiation factor 3 (eIF-3) complex, which is involved in protein synthesis of a specialized repertoire of mRNAs and, together with other initiation factors, stimulates binding of mRNA and methionyl-tRNAi to the 40S ribosome. The eIF-3 complex specifically targets and initiates translation of a subset of mRNAs involved in cell proliferation. This is Eukaryotic translation initiation factor 3 subunit I from Kluyveromyces lactis (strain ATCC 8585 / CBS 2359 / DSM 70799 / NBRC 1267 / NRRL Y-1140 / WM37) (Yeast).